Here is a 486-residue protein sequence, read N- to C-terminus: Na(+)/H(+) antiporter NhaA 2 (486 aa).

Helical transmembrane passes span 58-78, 102-122, 138-158, 168-188, 198-218, 220-240, 260-280, 300-320, 338-358, 374-394, and 404-424; these read GGLL…TAPG, LTDW…GLEL, ALPV…CLAL, AWAI…SLAG, VLLG…ALGL, HGIN…TALA, ISLH…GLLV, LGPI…TGVS, VAVG…WLAV, LVPL…ITRL, and GAST…LTAL. The tract at residues 432–486 is disordered; sequence GAPATRGSSRPATQVGGVAGPIPQTRRESDGGPTGGQEPPPARVRRAPPASPHPR.

It belongs to the NhaA Na(+)/H(+) (TC 2.A.33) antiporter family.

It localises to the cell membrane. It catalyses the reaction Na(+)(in) + 2 H(+)(out) = Na(+)(out) + 2 H(+)(in). Na(+)/H(+) antiporter that extrudes sodium in exchange for external protons. The polypeptide is Na(+)/H(+) antiporter NhaA 2 (Frankia alni (strain DSM 45986 / CECT 9034 / ACN14a)).